Here is a 321-residue protein sequence, read N- to C-terminus: Lipoyl synthase (321 aa).

[4Fe-4S] cluster is bound by residues cysteine 68, cysteine 73, cysteine 79, cysteine 94, cysteine 98, cysteine 101, and serine 308. The Radical SAM core domain maps to 80-297 (FNHGTATFMI…KEVALELGFT (218 aa)).

The protein belongs to the radical SAM superfamily. Lipoyl synthase family. The cofactor is [4Fe-4S] cluster.

Its subcellular location is the cytoplasm. It catalyses the reaction [[Fe-S] cluster scaffold protein carrying a second [4Fe-4S](2+) cluster] + N(6)-octanoyl-L-lysyl-[protein] + 2 oxidized [2Fe-2S]-[ferredoxin] + 2 S-adenosyl-L-methionine + 4 H(+) = [[Fe-S] cluster scaffold protein] + N(6)-[(R)-dihydrolipoyl]-L-lysyl-[protein] + 4 Fe(3+) + 2 hydrogen sulfide + 2 5'-deoxyadenosine + 2 L-methionine + 2 reduced [2Fe-2S]-[ferredoxin]. It functions in the pathway protein modification; protein lipoylation via endogenous pathway; protein N(6)-(lipoyl)lysine from octanoyl-[acyl-carrier-protein]: step 2/2. Functionally, catalyzes the radical-mediated insertion of two sulfur atoms into the C-6 and C-8 positions of the octanoyl moiety bound to the lipoyl domains of lipoate-dependent enzymes, thereby converting the octanoylated domains into lipoylated derivatives. The polypeptide is Lipoyl synthase (Vibrio parahaemolyticus serotype O3:K6 (strain RIMD 2210633)).